A 311-amino-acid polypeptide reads, in one-letter code: MAAPRAPRALTAAAPGSGKAKLTHPGKAILAGGLAGGIEICITFPTEYVKTQLQLDERANPPRYRGIGDCVRQTVRSHGVLGLYRGLSSLLYGSIPKAAVRFGMFEFLSNHMRDAQGRLDSRRGLLCGLGAGVAEAVVVVCPMETVKVKFIHDQTSSNPKYRGFFHGVREIVREQGLKGTYQGLTATVLKQGSNQAIRFFVMTSLRNWYQGDNPNKPMNPLITGVFGAVAGAASVFGNTPLDVIKTRMQGLEAHKYRNTLDCGVQILKNEGPKAFYKGTVPRLGRVCLDVAIVFVIYDEVVKLLNKVWKTD.

The propeptide at 1 to 13 (MAAPRAPRALTAA) is removed in mature form. Solcar repeat units lie at residues 23-111 (THPG…LSNH), 122-208 (RRGL…LRNW), and 218-303 (MNPL…VVKL). 3 helical membrane passes run 29–46 (ILAG…TFPT), 86–105 (GLSS…FGMF), and 129–143 (LGAG…VCPM). Phosphoserine is present on Ser156. The next 3 membrane-spanning stretches (helical) occupy residues 183–202 (GLTA…FFVM), 224–241 (GVFG…NTPL), and 278–297 (GTVP…FVIY).

It belongs to the mitochondrial carrier (TC 2.A.29) family. Post-translationally, possesses a short cleavable presequence, which, however, is found to be dispensable both for targeting to mitochondria and insertion into the inner membrane. However, the presequence is required to keep SLC25A1 in a soluble state and thus in an import-competent state. Mature SLC25A1 lacking the presequence is prone to aggregation.

The protein resides in the mitochondrion inner membrane. The catalysed reaction is (S)-malate(in) + citrate(out) = (S)-malate(out) + citrate(in). The enzyme catalyses citrate(out) + succinate(in) = citrate(in) + succinate(out). It carries out the reaction D-threo-isocitrate(in) + citrate(out) = D-threo-isocitrate(out) + citrate(in). It catalyses the reaction cis-aconitate(in) + citrate(out) = cis-aconitate(out) + citrate(in). The catalysed reaction is trans-aconitate(in) + citrate(out) = trans-aconitate(out) + citrate(in). The enzyme catalyses phosphoenolpyruvate(in) + citrate(out) = phosphoenolpyruvate(out) + citrate(in). It carries out the reaction maleate(in) + citrate(out) = maleate(out) + citrate(in). Its function is as follows. Mitochondrial electroneutral antiporter that exports citrate from the mitochondria into the cytosol in exchange for malate. Also able to mediate the exchange of citrate for isocitrate, phosphoenolpyruvate, cis-aconitate and to a lesser extent trans-aconitate, maleate and succinate. In the cytoplasm, citrate plays important roles in fatty acid and sterol synthesis, regulation of glycolysis, protein acetylation, and other physiopathological processes. This is Tricarboxylate transport protein, mitochondrial (Slc25a1) from Rattus norvegicus (Rat).